A 202-amino-acid polypeptide reads, in one-letter code: Large ribosomal subunit protein eL13 (202 aa).

It belongs to the eukaryotic ribosomal protein eL13 family.

This Nicotiana tabacum (Common tobacco) protein is Large ribosomal subunit protein eL13 (RPL13).